The following is a 297-amino-acid chain: L-ribulose 3-epimerase (297 aa).

Catalysis depends on Glu-147, which acts as the Proton donor/acceptor. Glu-147 serves as a coordination point for Mn(2+). Residues Glu-153 and 180-183 (DTFH) contribute to the substrate site. Mn(2+) is bound by residues Asp-180 and His-206. Arg-212 lines the substrate pocket. Glu-241 functions as the Proton donor/acceptor in the catalytic mechanism. Mn(2+) is bound at residue Glu-241.

The protein belongs to the hyi family. Homotetramer. Requires Mn(2+) as cofactor.

It catalyses the reaction L-ribulose = L-xylulose. It carries out the reaction keto-D-tagatose = keto-D-sorbose. The catalysed reaction is D-allulose = keto-D-fructose. Its activity is regulated as follows. Strongly inhibited by Co(2+) and Ni(2+), and slightly inhibited by EDTA. Catalyzes the epimerization of various ketoses at the C(3) position. It is able to interconvert L-ribulose with high efficiency. The enzyme can also accept other ketopentoses such as D-psicose and D-tagatose with lower efficiency. The chain is L-ribulose 3-epimerase from Mesorhizobium japonicum (strain LMG 29417 / CECT 9101 / MAFF 303099) (Mesorhizobium loti (strain MAFF 303099)).